Consider the following 478-residue polypeptide: Receptor-interacting serine/threonine-protein kinase 3 (478 aa).

Ser2 is subject to Phosphoserine. The Protein kinase domain maps to 22-290 (LENLGFVGKG…CESKTNNVYI (269 aa)). Residues 28 to 36 (VGKGGFGAV) and Lys51 each bind ATP. The Proton acceptor role is filled by Asp143. Residue Ser165 is modified to Phosphoserine. Residue Thr185 is modified to Phosphothreonine. Residue Ser201 is modified to Phosphoserine; by autocatalysis. Thr228 carries the post-translational modification Phosphothreonine. The residue at position 229 (Ser229) is a Phosphoserine; by autocatalysis. A Phosphothreonine modification is found at Thr254. Residues Ser301 and Ser323 each carry the phosphoserine modification. The segment at 311-330 (RSSDTKLSARESSQKGTEVD) is disordered. Basic and acidic residues predominate over residues 313–330 (SDTKLSARESSQKGTEVD). Residue Thr335 is modified to Phosphothreonine. Phosphoserine is present on residues Ser350, Ser369, and Ser380. Residues 362–429 (ERRGKEASFG…RNSNPWYTWN (68 aa)) form a disordered region. The span at 376-385 (AGTSSDTLAG) shows a compositional bias: polar residues. Thr392 is subject to Phosphothreonine. Residues 413 to 429 (QRNQGDGRNSNPWYTWN) show a composition bias toward polar residues. Residues 437–461 (LQSIVLNNCSEVQIGQHNCMSVQPR) carry the RIP homotypic interaction motif (RHIM) motif. The residue at position 474 (Arg474) is an Omega-N-methylarginine.

This sequence belongs to the protein kinase superfamily. TKL Ser/Thr protein kinase family. Interacts (via RIP homotypic interaction motif) with RIPK1 (via RIP homotypic interaction motif); this interaction induces RIPK1 phosphorylation and formation of a RIPK1-RIPK3 necrosis-inducing complex. Interacts with MLKL; the interaction is direct and triggers necroptosis. Interacts with ZBP1 (via RIP homotypic interaction motif); interaction with ZBP1 activates RIPK3, triggering necroptosis. Upon TNF-induced necrosis, the RIPK1-RIPK3 dimer further interacts with PGAM5 and MLKL; the formation of this complex leads to PGAM5 phosphorylation and increase in PGAM5 phosphatase activity. Binds TRAF2 and is recruited to the TNFR-1 signaling complex. Interacts with PYGL, GLUL and GLUD1; these interactions result in activation of these metabolic enzymes. Interacts with BIRC2/c-IAP1, BIRC3/c-IAP2 and XIAP/BIRC4. Interacts with ARHGEF2. Interacts with PELI1 (via atypical FHA domain); the phosphorylated form at Thr-185 binds preferentially to PELI1. Interacts with BUB1B, TRAF2 and STUB1. Interacts with CASP6. Component of the AIM2 PANoptosome complex, a multiprotein complex that drives inflammatory cell death (PANoptosis). RIPK1 and RIPK3 undergo reciprocal auto- and trans-phosphorylation. Autophosphorylated following interaction with ZBP1. Phosphorylation of Ser-201 plays a role in the necroptotic function of RIPK3. Autophosphorylates at Thr-228 and Ser-229 following activation by ZBP1: phosphorylation at these sites is a hallmark of necroptosis and is required for binding MLKL. Phosphorylation at Thr-185 is important for its kinase activity, interaction with PELI1 and for its ability to mediate TNF-induced necroptosis. In terms of processing, polyubiquitinated with 'Lys-48' and 'Lys-63'-linked chains by BIRC2/c-IAP1 and BIRC3/c-IAP2, leading to activation of NF-kappa-B. Ubiquitinated by STUB1 leading to its subsequent proteasome-dependent degradation.

It is found in the cytoplasm. Its subcellular location is the cytosol. It localises to the nucleus. The enzyme catalyses L-seryl-[protein] + ATP = O-phospho-L-seryl-[protein] + ADP + H(+). It carries out the reaction L-threonyl-[protein] + ATP = O-phospho-L-threonyl-[protein] + ADP + H(+). With respect to regulation, activity is stimulated by ZBP1, which senses double-stranded Z-RNA structures. RIPK3-dependent necroptosis is inhibited by RIPK1: RIPK1 prevents the ZBP1-induced activation of RIPK3 via FADD-mediated recruitment of CASP8, which cleaves RIPK1 and limits TNF-induced necroptosis. In terms of biological role, serine/threonine-protein kinase that activates necroptosis and apoptosis, two parallel forms of cell death. Necroptosis, a programmed cell death process in response to death-inducing TNF-alpha family members, is triggered by RIPK3 following activation by ZBP1. Activated RIPK3 forms a necrosis-inducing complex and mediates phosphorylation of MLKL, promoting MLKL localization to the plasma membrane and execution of programmed necrosis characterized by calcium influx and plasma membrane damage. In addition to TNF-induced necroptosis, necroptosis can also take place in the nucleus in response to orthomyxoviruses infection: following ZBP1 activation, which senses double-stranded Z-RNA structures, nuclear RIPK3 catalyzes phosphorylation and activation of MLKL, promoting disruption of the nuclear envelope and leakage of cellular DNA into the cytosol. Also regulates apoptosis: apoptosis depends on RIPK1, FADD and CASP8, and is independent of MLKL and RIPK3 kinase activity. Phosphorylates RIPK1: RIPK1 and RIPK3 undergo reciprocal auto- and trans-phosphorylation. In some cell types, also able to restrict viral replication by promoting cell death-independent responses. In response to flavivirus infection in neurons, promotes a cell death-independent pathway that restricts viral replication: together with ZBP1, promotes a death-independent transcriptional program that modifies the cellular metabolism via up-regulation expression of the enzyme ACOD1/IRG1 and production of the metabolite itaconate. Itaconate inhibits the activity of succinate dehydrogenase, generating a metabolic state in neurons that suppresses replication of viral genomes. RIPK3 binds to and enhances the activity of three metabolic enzymes: GLUL, GLUD1, and PYGL. These metabolic enzymes may eventually stimulate the tricarboxylic acid cycle and oxidative phosphorylation, which could result in enhanced ROS production. The sequence is that of Receptor-interacting serine/threonine-protein kinase 3 from Rattus norvegicus (Rat).